A 212-amino-acid chain; its full sequence is Adenylate kinase (212 aa).

10-15 (GAGKGT) is an ATP binding site. The NMP stretch occupies residues 30–59 (STGDMFRAAMVNQTEMGVLAKSYIDKGELV). Residues Thr-31, Arg-36, 57–59 (ELV), 86–89 (GYPR), and Gln-93 each bind AMP. The segment at 127-159 (GRIIHRVTGETFHKVFNPPVDYKEEDYYQREDD) is LID. ATP contacts are provided by residues Arg-128 and 137 to 138 (TF). Positions 156 and 167 each coordinate AMP. Gln-195 lines the ATP pocket.

Belongs to the adenylate kinase family. In terms of assembly, monomer.

It localises to the cytoplasm. The enzyme catalyses AMP + ATP = 2 ADP. Its pathway is purine metabolism; AMP biosynthesis via salvage pathway; AMP from ADP: step 1/1. Its function is as follows. Catalyzes the reversible transfer of the terminal phosphate group between ATP and AMP. Plays an important role in cellular energy homeostasis and in adenine nucleotide metabolism. The protein is Adenylate kinase of Streptococcus pneumoniae (strain 70585).